The sequence spans 206 residues: Probable GTP-binding protein EngB (206 aa).

The region spanning 23–195 (DLLEIAFVGR…WARIEAIMAE (173 aa)) is the EngB-type G domain. GTP-binding positions include 31–38 (GRSNVGKS), 58–62 (GRTQL), 76–79 (DLPG), 143–146 (TKCD), and 174–176 (FSA). Mg(2+)-binding residues include S38 and T60.

The protein belongs to the TRAFAC class TrmE-Era-EngA-EngB-Septin-like GTPase superfamily. EngB GTPase family. Requires Mg(2+) as cofactor.

In terms of biological role, necessary for normal cell division and for the maintenance of normal septation. The sequence is that of Probable GTP-binding protein EngB from Geobacter sulfurreducens (strain ATCC 51573 / DSM 12127 / PCA).